A 461-amino-acid polypeptide reads, in one-letter code: Bifunctional protein GlmU (461 aa).

Positions 1–227 are pyrophosphorylase; that stretch reads MEVIALILAA…PDEVLGVNDR (227 aa). Residues 8–11, K22, Q73, 78–79, 100–102, G137, E152, N167, and N225 contribute to the UDP-N-acetyl-alpha-D-glucosamine site; these read LAAG, GT, and YGD. Mg(2+) is bound at residue D102. N225 serves as a coordination point for Mg(2+). The segment at 228-248 is linker; the sequence is RQLAELERIYQVHQARALMER. Positions 249–461 are N-acetyltransferase; it reads GVTLRDPARF…EKARKESCAE (213 aa). UDP-N-acetyl-alpha-D-glucosamine-binding residues include R332 and K350. H362 acts as the Proton acceptor in catalysis. Positions 365 and 376 each coordinate UDP-N-acetyl-alpha-D-glucosamine. Acetyl-CoA-binding positions include A379, 385 to 386, S404, A422, and R439; that span reads NY.

The protein in the N-terminal section; belongs to the N-acetylglucosamine-1-phosphate uridyltransferase family. This sequence in the C-terminal section; belongs to the transferase hexapeptide repeat family. As to quaternary structure, homotrimer. It depends on Mg(2+) as a cofactor.

It localises to the cytoplasm. The catalysed reaction is alpha-D-glucosamine 1-phosphate + acetyl-CoA = N-acetyl-alpha-D-glucosamine 1-phosphate + CoA + H(+). It catalyses the reaction N-acetyl-alpha-D-glucosamine 1-phosphate + UTP + H(+) = UDP-N-acetyl-alpha-D-glucosamine + diphosphate. Its pathway is nucleotide-sugar biosynthesis; UDP-N-acetyl-alpha-D-glucosamine biosynthesis; N-acetyl-alpha-D-glucosamine 1-phosphate from alpha-D-glucosamine 6-phosphate (route II): step 2/2. It functions in the pathway nucleotide-sugar biosynthesis; UDP-N-acetyl-alpha-D-glucosamine biosynthesis; UDP-N-acetyl-alpha-D-glucosamine from N-acetyl-alpha-D-glucosamine 1-phosphate: step 1/1. It participates in bacterial outer membrane biogenesis; LPS lipid A biosynthesis. In terms of biological role, catalyzes the last two sequential reactions in the de novo biosynthetic pathway for UDP-N-acetylglucosamine (UDP-GlcNAc). The C-terminal domain catalyzes the transfer of acetyl group from acetyl coenzyme A to glucosamine-1-phosphate (GlcN-1-P) to produce N-acetylglucosamine-1-phosphate (GlcNAc-1-P), which is converted into UDP-GlcNAc by the transfer of uridine 5-monophosphate (from uridine 5-triphosphate), a reaction catalyzed by the N-terminal domain. The polypeptide is Bifunctional protein GlmU (Methylococcus capsulatus (strain ATCC 33009 / NCIMB 11132 / Bath)).